We begin with the raw amino-acid sequence, 105 residues long: Cyclotide vibi-E (105 aa).

Residues 1-9 (AAFALPALA) form the signal peptide. The propeptide occupies 10–69 (SSFEKDVISFRAIQAVLEKRGLSKLEDDPVLSALAHTKTIISNPVIEEALLNGANLKAGN). The segment at residues 70-99 (GIPCAESCVWIPCTVTALIGCGCSNKVCYN) is a cross-link (cyclopeptide (Gly-Asn)). 3 disulfide bridges follow: cysteine 73-cysteine 90, cysteine 77-cysteine 92, and cysteine 82-cysteine 97. A propeptide spanning residues 100 to 105 (SLQTKY) is cleaved from the precursor.

This is a cyclic peptide.

Functionally, probably participates in a plant defense mechanism. Has cytotoxic activity, active against a human lymphoma cell line with an IC(50) of 3.2 uM. In Viola biflora (Yellow wood violet), this protein is Cyclotide vibi-E.